Reading from the N-terminus, the 178-residue chain is uncharacterized protein (178 aa).

The span at 1-16 shows a compositional bias: basic and acidic residues; the sequence is MNKRTSVDASKEDLHP. The disordered stretch occupies residues 1–43; the sequence is MNKRTSVDASKEDLHPADPQSGEGVPPNRKNTKTSPRGEGTAP.

This is an uncharacterized protein from Homo sapiens (Human).